Consider the following 85-residue polypeptide: Toxin To9 (85 aa).

Positions 1–19 (MNYSTLIAVASLLTAGTES) are cleaved as a signal peptide. One can recognise an LCN-type CS-alpha/beta domain in the interval 21–81 (KDGYPVKEGD…AAIKGYGRCR (61 aa)). Cystine bridges form between cysteine 31–cysteine 80, cysteine 35–cysteine 56, cysteine 42–cysteine 63, and cysteine 46–cysteine 65. Proline 82 bears the Proline amide mark.

This sequence belongs to the long (4 C-C) scorpion toxin superfamily. Sodium channel inhibitor family. Alpha subfamily. As to expression, expressed by the venom gland.

The protein resides in the secreted. Functionally, alpha toxins bind voltage-independently at site-3 of sodium channels (Nav) and inhibit the inactivation of the activated channels, thereby blocking neuronal transmission. In Tityus obscurus (Amazonian scorpion), this protein is Toxin To9.